The chain runs to 139 residues: Small ribosomal subunit protein bS16 (139 aa).

Residues 84 to 139 form a disordered region; it reads KGEPAPAPLLQPAEKAARPSFEAIGGEDEGKGEAITQKKKADKRDEAAAESSASEA.

It belongs to the bacterial ribosomal protein bS16 family.

This chain is Small ribosomal subunit protein bS16, found in Streptomyces lividans.